Here is a 543-residue protein sequence, read N- to C-terminus: Heparanase-like protein 1 (543 aa).

An N-terminal signal peptide occupies residues Met-1–Ala-24. The N-linked (GlcNAc...) asparagine glycan is linked to Asn-184. Glu-201 acts as the Proton donor in catalysis. The N-linked (GlcNAc...) asparagine glycan is linked to Asn-304. The Nucleophile role is filled by Glu-320. Asn-425 and Asn-428 each carry an N-linked (GlcNAc...) asparagine glycan.

It belongs to the glycosyl hydrolase 79 family.

The protein resides in the lysosome membrane. The protein localises to the secreted. Endoglycosidase which is a cell surface and extracellular matrix-degrading enzyme. Cleaves heparan sulfate proteoglycans (HSPGs) into heparan sulfate side chains and core proteoglycans. The sequence is that of Heparanase-like protein 1 from Arabidopsis thaliana (Mouse-ear cress).